The chain runs to 331 residues: Ornithine carbamoyltransferase (331 aa).

Carbamoyl phosphate-binding positions include 55–58 (STRT), Gln82, Arg106, and 133–136 (HPTQ). L-ornithine-binding positions include Asn166, Asp230, and 234–235 (SM). Residues 272 to 273 (CL) and Arg317 contribute to the carbamoyl phosphate site.

This sequence belongs to the aspartate/ornithine carbamoyltransferase superfamily. OTCase family.

The protein localises to the cytoplasm. The enzyme catalyses carbamoyl phosphate + L-ornithine = L-citrulline + phosphate + H(+). The protein operates within amino-acid biosynthesis; L-arginine biosynthesis; L-arginine from L-ornithine and carbamoyl phosphate: step 1/3. Its function is as follows. Reversibly catalyzes the transfer of the carbamoyl group from carbamoyl phosphate (CP) to the N(epsilon) atom of ornithine (ORN) to produce L-citrulline. In Neisseria meningitidis serogroup A / serotype 4A (strain DSM 15465 / Z2491), this protein is Ornithine carbamoyltransferase (argF).